A 398-amino-acid polypeptide reads, in one-letter code: Cation channel sperm-associated protein 3 (398 aa).

Topologically, residues 1–48 are cytoplasmic; that stretch reads MSQHRHQRHSRVISSSPVDTTSVGFCPTFKKFKRNDDECRAFVKRVIM. The helical transmembrane segment at 49 to 71 threads the bilayer; that stretch reads SRFFKIIMISTVTSNAFFMALWT. The Extracellular portion of the chain corresponds to 72–80; it reads SYDIRYRLF. The helical transmembrane segment at 81 to 107 threads the bilayer; that stretch reads RLLEFSEIFFVSICTSELSMKVYVDPI. Residue Asn108 is a topological domain, cytoplasmic. Residues 109–131 traverse the membrane as a helical segment; sequence YWKNGYNLLDVIIIIVMFLPYAL. The Extracellular portion of the chain corresponds to 132–143; it reads RQLMGKQFTYLY. The chain crosses the membrane as a helical span at residues 144 to 160; it reads IADGMQSLRILKLIGYS. Residues 161–168 lie on the Cytoplasmic side of the membrane; sequence QGIRTLIT. Residues 169–195 form a helical membrane-spanning segment; the sequence is AVGQTVYTVASVLLLLFLLMYIFAILG. The Extracellular portion of the chain corresponds to 196–216; sequence FCLFGSPDNGDHDNWGNLAAA. An intramembrane region (helical; Pore-forming) is located at residues 217 to 236; the sequence is FFTLFSLATVDGWTDLQKQL. The Extracellular portion of the chain corresponds to 237-242; that stretch reads DNREFA. Residues 243 to 268 traverse the membrane as a helical segment; sequence LSRAFTIIFILLASFIFLNMFVGVMI. At 269 to 398 the chain is on the cytoplasmic side; that stretch reads MHTEDSIRKF…PQSLEKVDEK (130 aa).

The protein belongs to the cation channel sperm-associated (TC 1.A.1.19) family. In terms of assembly, component of the CatSper complex or CatSpermasome composed of the core pore-forming members CATSPER1, CATSPER2, CATSPER3 and CATSPER4 as well as auxiliary members CATSPERB, CATSPERG, CATSPERD, CATSPERE, CATSPERZ, C2CD6/CATSPERT, TMEM249, TMEM262 and EFCAB9. HSPA1 may be an additional auxiliary complex member. The core complex members CATSPER1, CATSPER2, CATSPER3 and CATSPER4 form a heterotetrameric channel. The auxiliary CATSPERB, CATSPERG, CATSPERD and CATSPERE subunits form a pavilion-like structure over the pore which stabilizes the complex through interactions with CATSPER4, CATSPER3, CATSPER1 and CATSPER2 respectively. TMEM262/CATSPERH interacts with CATSPERB, further stabilizing the complex. C2CD6/CATSPERT interacts at least with CATSPERD and is required for targeting the CatSper complex in the flagellar membrane. As to expression, testis-specific.

It is found in the cell projection. The protein resides in the cilium. It localises to the flagellum membrane. The catalysed reaction is Ca(2+)(in) = Ca(2+)(out). Its activity is regulated as follows. The CatSper calcium channel is indirectly activated by extracellular progesterone and prostaglandins following the sequence: progesterone &gt; PGF1-alpha = PGE1 &gt; PGA1 &gt; PGE2 &gt;&gt; PGD2. The CatSper calcium channel is directly inhibited by endocannabinoid 2-arachidonoylglycerol (2AG). Indirect activation by progesterone takes place via the following mechanism: progesterone binds and activates the acylglycerol lipase ABHD2, which in turn mediates hydrolysis of 2AG inhibitor, relieving inhibition of the CatSper channel. The primary effect of progesterone activation is to shift voltage dependence towards more physiological, negative membrane potentials; it is not mediated by metabotropic receptors and second messengers. Sperm capacitation enhances the effect of progesterone by providing additional negative shift. Also activated by the elevation of intracellular pH. In terms of biological role, pore-forming subunit of the CatSper complex, a sperm-specific voltage-gated calcium channel that plays a central role in calcium-dependent physiological responses essential for successful fertilization, such as sperm hyperactivation, acrosome reaction and chemotaxis towards the oocyte. The protein is Cation channel sperm-associated protein 3 (CATSPER3) of Homo sapiens (Human).